An 893-amino-acid chain; its full sequence is Probable disease resistance protein At1g62630 (893 aa).

Residues Gly-24–Glu-68 adopt a coiled-coil conformation. Residues Thr-136–Gly-440 enclose the NB-ARC domain. Gly-179–Thr-186 contributes to the ATP binding site. 6 LRR repeats span residues Val-516–Met-537, Glu-538–Lys-559, Lys-571–Leu-593, Ser-595–Lys-617, Lys-618–His-640, and Asn-641–Glu-663.

This sequence belongs to the disease resistance NB-LRR family.

Functionally, probable disease resistance protein. This is Probable disease resistance protein At1g62630 from Arabidopsis thaliana (Mouse-ear cress).